A 222-amino-acid chain; its full sequence is U-scoloptoxin(11)-Sm5a (222 aa).

This sequence belongs to the scoloptoxin-11 family. Contains 8 disulfide bonds. As to expression, expressed by the venom gland.

It localises to the secreted. This is U-scoloptoxin(11)-Sm5a from Scolopendra morsitans (Tanzanian blue ringleg centipede).